The following is a 544-amino-acid chain: MIRYIFITGGVVSSLGKGIASASLGALLQSRGYRVRLRKLDPYLNVDPGTMSPRQHGEVYVTDDGAETDLDLGHYERFTGVSARQSDNITTGRIYQRIIEKERRGDYLGATIQVIPHVTNDIKEFVLSDPGEGVDFVLCEIGGTVGDIEGLPFFEAIRQLGQELGPQRACFIHLTLLPYIPAAGEMKTKPTQHSVKELRSIGIQPQILLCRCDRPIPVNEKGKIASFCNVRLASVIEARDVGHIYDVPMAYHAEGLDSEVLSHFGITDAPPPDLSSWQRIAQTIKNPDGQVTIGLVGKYTDVPDAYKSVSEALGHGGLANKVKVDIRFVDSEKFDDPDAALEDLDGVHGILLPGGFGERGAHGKMRVARYARERNMPCFGICYGMQLSVVEAARNLAGIKNASTSEFGPTKEPVVGLMEEWTKGNEKVTRDASTDLGGTMRLGAYPARLKEGSMVAQVYGSLEISERHRHRYEVNASYIERLEKAGMIFSGMSPDGRLPEIVELEGHPWFIGVQFHPELKSRPFEPHPLFASFIAAAVKQSRLV.

The interval 1–266 (MIRYIFITGG…DSEVLSHFGI (266 aa)) is amidoligase domain. Residue Ser13 participates in CTP binding. Ser13 is a UTP binding site. ATP-binding positions include 14–19 (SLGKGI) and Asp71. Residues Asp71 and Glu140 each contribute to the Mg(2+) site. CTP is bound by residues 147-149 (DIE), 187-192 (KTKPTQ), and Lys223. Residues 187-192 (KTKPTQ) and Lys223 each bind UTP. Residue 239-241 (RDV) participates in ATP binding. A Glutamine amidotransferase type-1 domain is found at 292-543 (TIGLVGKYTD…IAAAVKQSRL (252 aa)). Gly355 contacts L-glutamine. Catalysis depends on Cys382, which acts as the Nucleophile; for glutamine hydrolysis. Residues 383–386 (YGMQ), Glu406, and Arg471 each bind L-glutamine. Residues His516 and Glu518 contribute to the active site.

Belongs to the CTP synthase family. In terms of assembly, homotetramer.

The enzyme catalyses UTP + L-glutamine + ATP + H2O = CTP + L-glutamate + ADP + phosphate + 2 H(+). The catalysed reaction is L-glutamine + H2O = L-glutamate + NH4(+). It carries out the reaction UTP + NH4(+) + ATP = CTP + ADP + phosphate + 2 H(+). It participates in pyrimidine metabolism; CTP biosynthesis via de novo pathway; CTP from UDP: step 2/2. With respect to regulation, allosterically activated by GTP, when glutamine is the substrate; GTP has no effect on the reaction when ammonia is the substrate. The allosteric effector GTP functions by stabilizing the protein conformation that binds the tetrahedral intermediate(s) formed during glutamine hydrolysis. Inhibited by the product CTP, via allosteric rather than competitive inhibition. Catalyzes the ATP-dependent amination of UTP to CTP with either L-glutamine or ammonia as the source of nitrogen. Regulates intracellular CTP levels through interactions with the four ribonucleotide triphosphates. The sequence is that of CTP synthase from Hyphomonas neptunium (strain ATCC 15444).